Reading from the N-terminus, the 472-residue chain is Velvet complex subunit umv2 (472 aa).

4 stretches are compositionally biased toward basic and acidic residues: residues 1 to 10 (MSRSDTDGRD), 29 to 59 (SQRR…DSHG), 67 to 80 (YSRD…HRGD), and 89 to 105 (SYQR…EQER). Disordered regions lie at residues 1-121 (MSRS…PLEA), 281-327 (CDDG…QFGG), and 433-472 (SQGI…EDDE). Low complexity predominate over residues 106–116 (SYGGASASRSS). The region spanning 158-441 (ENGRRYRLVV…ASQGIKIPVR (284 aa)) is the Velvet domain. A compositionally biased stretch (polar residues) spans 286–298 (RSSTHPQHASEST). Positions 456–466 (DGMGDYDGASG) are enriched in gly residues.

The protein belongs to the velvet family. VelB subfamily. Component of the heterotrimeric velvet complex composed of laeA, veA and velB; VeA acting as a bridging protein between laeA and velB. Forms a heterodimeric complex with vosA; the formation of the velB-vosA complex is light-dependent.

It is found in the nucleus. It localises to the cytoplasm. Functionally, component of the velvet transcription factor complex that controls sexual/asexual developmental ratio in response to light, promoting sexual development in the darkness while stimulating asexual sporulation under illumination. The velvet complex acts as a global regulator for secondary metabolite gene expression. Component of the velB-VosA heterodimeric complex that plays a dual role in activating genes associated with spore maturation and repressing certain development-associated genes. The velB-VosA complex binds DNA through the DNA-binding domain of vosA that recognizes an 11-nucleotide consensus sequence 5'-CTGGCCGCGGC-3' consisting of two motifs in the promoters of key developmental regulatory genes. Required for full virulence on seedlings. The chain is Velvet complex subunit umv2 from Mycosarcoma maydis (Corn smut fungus).